Here is an 814-residue protein sequence, read N- to C-terminus: Phenylalanine--tRNA ligase beta subunit (814 aa).

The 115-residue stretch at Ser-39 to Ala-153 folds into the tRNA-binding domain. The region spanning Ala-414–Ala-498 is the B5 domain. Asp-476, Asp-482, Glu-485, and Glu-486 together coordinate Mg(2+). In terms of domain architecture, FDX-ACB spans Pro-720–Arg-813.

The protein belongs to the phenylalanyl-tRNA synthetase beta subunit family. Type 1 subfamily. In terms of assembly, tetramer of two alpha and two beta subunits. Mg(2+) serves as cofactor.

The protein localises to the cytoplasm. The catalysed reaction is tRNA(Phe) + L-phenylalanine + ATP = L-phenylalanyl-tRNA(Phe) + AMP + diphosphate + H(+). In Parasynechococcus marenigrum (strain WH8102), this protein is Phenylalanine--tRNA ligase beta subunit.